Here is a 478-residue protein sequence, read N- to C-terminus: Probable cytosolic Fe-S cluster assembly factor AGAP009023 (478 aa).

Residues C23, C69, C72, C75, C189, C245, C396, and C400 each contribute to the [4Fe-4S] cluster site.

Belongs to the NARF family.

Functionally, component of the cytosolic iron-sulfur (Fe/S) protein assembly machinery. Required for maturation of extramitochondrial Fe/S proteins. The polypeptide is Probable cytosolic Fe-S cluster assembly factor AGAP009023 (Anopheles gambiae (African malaria mosquito)).